Reading from the N-terminus, the 158-residue chain is MAKVESFTLDHTKVKAPYVRLITVEEGAKGDKISNYDLRLVQPNENAIPTAGLHTIEHLLAGLLRDRLDGVIDCSPFGCRTGFHLITWGEHSTTEVAKALKSSLEEIAYKTKWEDVQGTTIESCGNYRDHSLFSAKEWSKKILDEGISDKPFERHVVD.

Fe cation-binding residues include histidine 54, histidine 58, and cysteine 124.

This sequence belongs to the LuxS family. As to quaternary structure, homodimer. Requires Fe cation as cofactor.

The catalysed reaction is S-(5-deoxy-D-ribos-5-yl)-L-homocysteine = (S)-4,5-dihydroxypentane-2,3-dione + L-homocysteine. Functionally, involved in the synthesis of autoinducer 2 (AI-2) which is secreted by bacteria and is used to communicate both the cell density and the metabolic potential of the environment. The regulation of gene expression in response to changes in cell density is called quorum sensing. Catalyzes the transformation of S-ribosylhomocysteine (RHC) to homocysteine (HC) and 4,5-dihydroxy-2,3-pentadione (DPD). This chain is S-ribosylhomocysteine lyase, found in Limosilactobacillus reuteri (Lactobacillus reuteri).